The primary structure comprises 141 residues: Hemoglobin subunit alpha (141 aa).

One can recognise a Globin domain in the interval 1–141 (VLSPADKTNV…VSTVLTSKYR (141 aa)). A Phosphoserine modification is found at serine 3. Lysine 7 is subject to N6-succinyllysine. Phosphothreonine is present on threonine 8. An N6-succinyllysine modification is found at lysine 11. Lysine 16 carries the post-translational modification N6-acetyllysine; alternate. An N6-succinyllysine; alternate modification is found at lysine 16. Tyrosine 24 is subject to Phosphotyrosine. Position 35 is a phosphoserine (serine 35). The residue at position 40 (lysine 40) is an N6-succinyllysine. Serine 49 carries the phosphoserine modification. Residue histidine 58 participates in O2 binding. Histidine 87 serves as a coordination point for heme b. Serine 102 is subject to Phosphoserine. Threonine 108 is subject to Phosphothreonine. Serine 124 bears the Phosphoserine mark. Residues threonine 134 and threonine 137 each carry the phosphothreonine modification. Serine 138 bears the Phosphoserine mark.

Belongs to the globin family. Heterotetramer of two alpha chains and two beta chains. Red blood cells.

In terms of biological role, involved in oxygen transport from the lung to the various peripheral tissues. Functionally, hemopressin acts as an antagonist peptide of the cannabinoid receptor CNR1. Hemopressin-binding efficiently blocks cannabinoid receptor CNR1 and subsequent signaling. The sequence is that of Hemoglobin subunit alpha (HBA) from Pteronura brasiliensis (Giant otter).